A 133-amino-acid polypeptide reads, in one-letter code: S-adenosylmethionine decarboxylase proenzyme (133 aa).

Serine 63 serves as the catalytic Schiff-base intermediate with substrate; via pyruvic acid. Position 63 is a pyruvic acid (Ser); by autocatalysis (serine 63). Catalysis depends on histidine 68, which acts as the Proton acceptor; for processing activity. Cysteine 83 serves as the catalytic Proton donor; for catalytic activity.

This sequence belongs to the prokaryotic AdoMetDC family. Type 1 subfamily. In terms of assembly, heterotetramer of two alpha and two beta chains arranged as a dimer of alpha/beta heterodimers. It depends on pyruvate as a cofactor. In terms of processing, is synthesized initially as an inactive proenzyme. Formation of the active enzyme involves a self-maturation process in which the active site pyruvoyl group is generated from an internal serine residue via an autocatalytic post-translational modification. Two non-identical subunits are generated from the proenzyme in this reaction, and the pyruvate is formed at the N-terminus of the alpha chain, which is derived from the carboxyl end of the proenzyme. The post-translation cleavage follows an unusual pathway, termed non-hydrolytic serinolysis, in which the side chain hydroxyl group of the serine supplies its oxygen atom to form the C-terminus of the beta chain, while the remainder of the serine residue undergoes an oxidative deamination to produce ammonia and the pyruvoyl group blocking the N-terminus of the alpha chain.

The enzyme catalyses S-adenosyl-L-methionine + H(+) = S-adenosyl 3-(methylsulfanyl)propylamine + CO2. It participates in amine and polyamine biosynthesis; S-adenosylmethioninamine biosynthesis; S-adenosylmethioninamine from S-adenosyl-L-methionine: step 1/1. Its function is as follows. Catalyzes the decarboxylation of S-adenosylmethionine to S-adenosylmethioninamine (dcAdoMet), the propylamine donor required for the synthesis of the polyamines spermine and spermidine from the diamine putrescine. The protein is S-adenosylmethionine decarboxylase proenzyme of Acidithiobacillus ferrooxidans (strain ATCC 23270 / DSM 14882 / CIP 104768 / NCIMB 8455) (Ferrobacillus ferrooxidans (strain ATCC 23270)).